A 333-amino-acid chain; its full sequence is Transaldolase NQM1 (333 aa).

Lys144 serves as the catalytic Schiff-base intermediate with substrate.

It belongs to the transaldolase family. Type 1 subfamily. In terms of assembly, homodimer.

The catalysed reaction is D-sedoheptulose 7-phosphate + D-glyceraldehyde 3-phosphate = D-erythrose 4-phosphate + beta-D-fructose 6-phosphate. It functions in the pathway carbohydrate degradation; pentose phosphate pathway; D-glyceraldehyde 3-phosphate and beta-D-fructose 6-phosphate from D-ribose 5-phosphate and D-xylulose 5-phosphate (non-oxidative stage): step 2/3. In terms of biological role, transaldolase is important for the balance of metabolites in the pentose-phosphate pathway. The sequence is that of Transaldolase NQM1 (NQM1) from Saccharomyces cerevisiae (strain ATCC 204508 / S288c) (Baker's yeast).